The primary structure comprises 103 residues: SGSSPSSNSNYCNLMMFCRKMTQGKCKLVNTFVHESLADVKAVCSQKKVACKNGQTNCYQSNSAMRITDCRQTGSSKYPNCTCKTTRAEKHIIVACEGKXFMP.

Cystine bridges form between cysteine 12–cysteine 70, cysteine 26–cysteine 81, cysteine 44–cysteine 96, and cysteine 51–cysteine 58. Residues 27–31 (KLVNT), lysine 52, and arginine 71 contribute to the substrate site.

Belongs to the pancreatic ribonuclease family. As to quaternary structure, homodimer; disulfide-linked.

The protein resides in the secreted. It carries out the reaction an [RNA] containing cytidine + H2O = an [RNA]-3'-cytidine-3'-phosphate + a 5'-hydroxy-ribonucleotide-3'-[RNA].. The enzyme catalyses an [RNA] containing uridine + H2O = an [RNA]-3'-uridine-3'-phosphate + a 5'-hydroxy-ribonucleotide-3'-[RNA].. In terms of biological role, this enzyme hydrolyzes both single- and double-stranded RNA. The chain is Seminal ribonuclease (SRN) from Cephalophus silvicultor (Yellow-backed duiker).